Here is a 1083-residue protein sequence, read N- to C-terminus: Ubiquitin-protein ligase E3C (1083 aa).

Composition is skewed to basic and acidic residues over residues 1–10 (MFSFEGDFKT) and 20–40 (SRKE…RKRE). The interval 1–40 (MFSFEGDFKTRPKVSLGGASRKEEKASLLHRTQEERRKRE) is disordered. The cis-determinant of acceptor ubiquitin-binding stretch occupies residues 1–60 (MFSFEGDFKTRPKVSLGGASRKEEKASLLHRTQEERRKREEERRRLKNAIIIQSFIRGYR). The 30-residue stretch at 45-74 (RLKNAIIIQSFIRGYRDRKQQYSIQRSAFD) folds into the IQ domain. The disordered stretch occupies residues 355–385 (SPASASCHDSASDSEEESEEADKPSSPEDGR). Positions 375-385 (ADKPSSPEDGR) are enriched in basic and acidic residues. Residues 744-1083 (NEPDLKKRIR…IECAAGFELS (340 aa)) form the HECT domain. Lys-903 is covalently cross-linked (Glycyl lysine isopeptide (Lys-Gly) (interchain with G-Cter in ubiquitin); by autocatalysis). Cys-1051 acts as the Glycyl thioester intermediate in catalysis.

It belongs to the UBE3C family. Interacts with 26S proteasomes. Interacts (via the HECT domain) with UBE2D1 and, less efficiently, with UBE2L3. Autoubiquitinated; promoting its own degradation. In terms of tissue distribution, highly expressed in skeletal muscle. Detected at much lower levels in kidney and pancreas.

It catalyses the reaction S-ubiquitinyl-[E2 ubiquitin-conjugating enzyme]-L-cysteine + [acceptor protein]-L-lysine = [E2 ubiquitin-conjugating enzyme]-L-cysteine + N(6)-ubiquitinyl-[acceptor protein]-L-lysine.. It participates in protein modification; protein ubiquitination. Its function is as follows. E3 ubiquitin-protein ligase that specifically catalyzes 'Lys-29'- and 'Lys-48'-linked polyubiquitin chains. Accepts ubiquitin from the E2 ubiquitin-conjugating enzyme UBE2D1 in the form of a thioester and then directly transfers the ubiquitin to targeted substrates. Associates with the proteasome and promotes elongation of ubiquitin chains on substrates bound to the 26S proteasome. Also catalyzes 'Lys-29'- and 'Lys-48'-linked ubiquitination of 26S proteasome subunit ADRM1/RPN13 in response to proteotoxic stress, impairing the ability of the proteasome to bind and degrade ubiquitin-conjugated proteins. Acts as a negative regulator of autophagy by mediating 'Lys-29'- and 'Lys-48'-linked ubiquitination of PIK3C3/VPS34, promoting its degradation. Can assemble unanchored poly-ubiquitin chains in either 'Lys-29'- or 'Lys-48'-linked polyubiquitin chains; with some preference for 'Lys-48' linkages. Acts as a negative regulator of type I interferon by mediating 'Lys-48'-linked ubiquitination of IRF3 and IRF7, leading to their degradation by the proteasome. Catalyzes ubiquitination and degradation of CAND2. This chain is Ubiquitin-protein ligase E3C, found in Homo sapiens (Human).